We begin with the raw amino-acid sequence, 191 residues long: GDP-mannose pyrophosphatase (191 aa).

Residues Y17, 38–40 (KRE), R67, and 85–87 (AGL) each bind GDP-alpha-D-mannose. Residues 43 to 180 (DRGNGATILL…EIRDGKTVLL (138 aa)) enclose the Nudix hydrolase domain. Residues A85, E100, and E104 each contribute to the Mg(2+) site. Positions 86–106 (GLLDNDEPEVCIRKEAIEETG) match the Nudix box motif. Residues E104, E127, 150-151 (DE), and K176 contribute to the GDP-alpha-D-mannose site. E151 is a Mg(2+) binding site.

It belongs to the Nudix hydrolase family. NudK subfamily. Homodimer. The cofactor is Mg(2+).

The enzyme catalyses GDP-alpha-D-mannose + H2O = alpha-D-mannose 1-phosphate + GMP + 2 H(+). Nucleoside diphosphate sugar hydrolase that hydrolyzes GDP-mannose as its preferred substrate, yielding GMP and mannose-1-phosphate. The polypeptide is GDP-mannose pyrophosphatase (nudK) (Shigella dysenteriae serotype 1 (strain Sd197)).